A 749-amino-acid polypeptide reads, in one-letter code: Catalase-peroxidase 2 (749 aa).

The first 27 residues, 1 to 27, serve as a signal peptide directing secretion; that stretch reads MFKRTIPLFAAFTLAISPSIFPNYAHA. A cross-link (tryptophyl-tyrosyl-methioninium (Trp-Tyr) (with M-255)) is located at residues 107–229; sequence WHAAGTYRIY…LAATVMGLIY (123 aa). Catalysis depends on His-108, which acts as the Proton acceptor. A cross-link (tryptophyl-tyrosyl-methioninium (Tyr-Met) (with W-107)) is located at residues 229–255; it reads YVNPEGPNGVPDPLAAAEKIRETFGRM. A heme b-binding site is contributed by His-270.

The protein belongs to the peroxidase family. Peroxidase/catalase subfamily. As to quaternary structure, homodimer or homotetramer. It depends on heme b as a cofactor. Formation of the three residue Trp-Tyr-Met cross-link is important for the catalase, but not the peroxidase activity of the enzyme.

The catalysed reaction is H2O2 + AH2 = A + 2 H2O. It carries out the reaction 2 H2O2 = O2 + 2 H2O. Bifunctional enzyme with both catalase and broad-spectrum peroxidase activity. The protein is Catalase-peroxidase 2 of Legionella pneumophila (strain Lens).